A 191-amino-acid polypeptide reads, in one-letter code: MEAKKIYAQALTDEAFAPFGSVVQQKDDVKMVSANGGTAKKYLKVSESIQNYEKSSSASTRKGVWNFFSTHPSVHPANDEHAAFQISVLERHPFTTQTFIPMCRSSDEQAYLIAVAPNAPDGMPDWNQTQAFVAKGAQGVTYSAGVWHAPMVTIGKETMLAAFNYENGVAEDDCQVQSTESPIEVFIKIST.

This sequence belongs to the ureidoglycolate lyase family. In terms of assembly, homodimer.

It carries out the reaction (S)-ureidoglycolate = urea + glyoxylate. The protein operates within nitrogen metabolism; (S)-allantoin degradation. In terms of biological role, catalyzes the catabolism of the allantoin degradation intermediate (S)-ureidoglycolate, generating urea and glyoxylate. Involved in the utilization of allantoin as secondary nitrogen source when primary sources are limiting. The chain is Ureidoglycolate lyase from Schizosaccharomyces pombe (strain 972 / ATCC 24843) (Fission yeast).